A 349-amino-acid polypeptide reads, in one-letter code: Signal peptidase I (349 aa).

2 helical membrane-spanning segments follow: residues 3 to 23 and 25 to 45; these read NLFF…LDYF and LPNT…VLWC. Residues 46–80 are Cytoplasmic-facing; it reads YHRFVVLPKRHRQVARAEQRSGKTLSEEEKAKIEP. Residues 81–101 form a helical membrane-spanning segment; it reads ISEASEFLSSLFPVLAVVFLV. Over 102-349 the chain is Periplasmic; the sequence is RSFLFEPFQI…RFERFFTAIK (248 aa). Active-site residues include Ser-115 and Lys-196.

The protein belongs to the peptidase S26 family.

Its subcellular location is the cell inner membrane. It catalyses the reaction Cleavage of hydrophobic, N-terminal signal or leader sequences from secreted and periplasmic proteins.. The protein is Signal peptidase I (lepB) of Haemophilus influenzae (strain ATCC 51907 / DSM 11121 / KW20 / Rd).